The sequence spans 163 residues: Lipoprotein signal peptidase (163 aa).

A run of 3 helical transmembrane segments spans residues 11-31, 63-83, and 88-108; these read ILIAVFVVIFDQVTKYIIATT, KMTFFFIITIIILIALVYFFI, and YNLFMQVAISLLFAGALGNFI. Active-site residues include Asp118 and Asp136. A helical membrane pass occupies residues 131–151; sequence IFNIADSSLTIGVILIIIALL.

This sequence belongs to the peptidase A8 family.

It localises to the cell membrane. It catalyses the reaction Release of signal peptides from bacterial membrane prolipoproteins. Hydrolyzes -Xaa-Yaa-Zaa-|-(S,diacylglyceryl)Cys-, in which Xaa is hydrophobic (preferably Leu), and Yaa (Ala or Ser) and Zaa (Gly or Ala) have small, neutral side chains.. It functions in the pathway protein modification; lipoprotein biosynthesis (signal peptide cleavage). This protein specifically catalyzes the removal of signal peptides from prolipoproteins. This chain is Lipoprotein signal peptidase, found in Staphylococcus aureus.